Reading from the N-terminus, the 656-residue chain is Vacuolar amino acid transporter 3 (656 aa).

Positions 1–109 (MSNSQSIKIK…VPSTSEDPDV (109 aa)) are disordered. Positions 15 to 28 (NENFASGSYSSRRS) are enriched in polar residues. Serine 37 and serine 53 each carry phosphoserine. Residues 50–71 (ISPSESNLPNNVAENTTDTPVN) are compositionally biased toward polar residues. The segment covering 75-97 (IRDENHNSRKGKDVTLNSDEAHS) has biased composition (basic and acidic residues). Phosphoserine is present on serine 172. Transmembrane regions (helical) follow at residues 280–300 (AVLL…PKAF), 307–327 (FSSA…LLLI), 351–371 (FAIL…YISF), 389–409 (EYHL…LSLV), 419–439 (ALIA…WDVI), 457–477 (FSLF…ILPI), 494–514 (VMAA…AAFG), 537–557 (LYAI…IAII), 578–598 (YLRV…SSRL), 601–621 (FVSM…PPML), and 636–656 (DIFM…MTFF).

This sequence belongs to the amino acid/polyamine transporter 2 family.

It is found in the endoplasmic reticulum membrane. It localises to the vacuole membrane. Its function is as follows. Involved in amino acid efflux from the vacuole to the cytoplasm. Capable of transporting large neutral amino acids including tyrosine, glutamine, asparagine, isoleucine and leucine. Required for spore formation. This Schizosaccharomyces pombe (strain 972 / ATCC 24843) (Fission yeast) protein is Vacuolar amino acid transporter 3 (avt3).